The sequence spans 415 residues: D-threonate kinase (415 aa).

Residues D9, R53, and K81–S84 contribute to the substrate site. Residues S251, G345–T348, and G392 each bind ATP.

It belongs to the four-carbon acid sugar kinase family.

The catalysed reaction is D-threonate + ATP = 4-O-phospho-D-threonate + ADP + H(+). Functionally, catalyzes the ATP-dependent phosphorylation of D-threonate to D-threonate 4-phosphate. Can also phosphorylate 4-hydroxy-L-threonine, with lower efficiency. The sequence is that of D-threonate kinase from Cupriavidus necator (strain ATCC 17699 / DSM 428 / KCTC 22496 / NCIMB 10442 / H16 / Stanier 337) (Ralstonia eutropha).